We begin with the raw amino-acid sequence, 327 residues long: Alkene monooxygenase system, ferredoxin--NAD(+) reductase component (327 aa).

A 2Fe-2S ferredoxin-type domain is found at 1–89; sequence MRLNDGRSFS…DLEINVRAGD (89 aa). Positions 32, 37, 40, and 73 each coordinate [2Fe-2S] cluster. Residues 96 to 194 enclose the FAD-binding FR-type domain; sequence PRRHAARVTV…EGPYGRAYLR (99 aa).

Belongs to the bacterial ring-hydroxylating dioxygenase ferredoxin reductase family. In terms of assembly, monomer. The alkene monooxygenase multicomponent enzyme system is composed of an electron transfer component and a monooxygenase component interacting with the effector protein XamoD. The electron transfer component is composed of a ferredoxin reductase (XamoF) and a ferredoxin (XamoC), and the monooxygenase component is formed by a heterohexamer (dimer of heterotrimers) of two alpha subunits (XamoA), two beta subunits (XamoE) and two gamma subunits (XamoB). FAD serves as cofactor. Requires [2Fe-2S] cluster as cofactor.

It localises to the cytoplasm. It catalyses the reaction 2 reduced [2Fe-2S]-[ferredoxin] + NAD(+) + H(+) = 2 oxidized [2Fe-2S]-[ferredoxin] + NADH. Its function is as follows. Reductase component of the alkene monooxygenase multicomponent enzyme system which catalyzes the O2- and NADH-dependent epoxidation of short chain (C2 to C6) alkenes to their corresponding epoxides. Ferredoxin reductase catalyzes the transfer of electrons from NADH to ferredoxin (XamoC). NADPH is also effective but with a rate approximately 3-fold lower than with NADH. In Xanthobacter autotrophicus (strain ATCC BAA-1158 / Py2), this protein is Alkene monooxygenase system, ferredoxin--NAD(+) reductase component.